The primary structure comprises 144 residues: L-fucose mutarotase (144 aa).

His22 functions as the Proton donor in the catalytic mechanism. Substrate is bound by residues Asp30, Arg109, and 131–133; that span reads YGN.

It belongs to the RbsD / FucU family. FucU mutarotase subfamily. As to quaternary structure, homodecamer.

The protein resides in the cytoplasm. It carries out the reaction alpha-L-fucose = beta-L-fucose. It participates in carbohydrate metabolism; L-fucose metabolism. Its function is as follows. Involved in the anomeric conversion of L-fucose. This Haemophilus influenzae (strain PittGG) protein is L-fucose mutarotase.